The primary structure comprises 98 residues: Integration host factor subunit alpha (98 aa).

The tract at residues 49 to 70 (FGNFDLRDKNQRPGRNPKTGED) is disordered.

This sequence belongs to the bacterial histone-like protein family. Heterodimer of an alpha and a beta chain.

In terms of biological role, this protein is one of the two subunits of integration host factor, a specific DNA-binding protein that functions in genetic recombination as well as in transcriptional and translational control. This is Integration host factor subunit alpha from Shewanella baltica (strain OS223).